Reading from the N-terminus, the 401-residue chain is MKQRRRRNGCSSSNTISLLLLFFLVFFSRTSTSTSCRRRTVKHLSTTSTSSTPLESRITSKVIVISIVSGILTGLVSALVLAFLVRSIVKFMKQTPILKGPVVFSPKITPKSLHAALSNGIQLLGSDLNGKYYKMVLDNGLVVAVKRLGSLEGVGSPESSSSKSVKRRLQKELELLAGLRHRNLMSLRAYVRESDEFSLVYDYMPNGSLEDVMNKVRTKEVELGWEIRLRVAVGIVKGLQYLHFSCETQILHYNLKPTNVMLDSEFEPRLADCGLAKIMPSSHTAVSCYSAPESSQSNRYTDKSDIFSFGMILGVLLTGRDPTHPFCEESASGGSLGQWLKHLQQSGEAREALDKTILGEEVEEDEMLMALRITIICLSDFPADRPSSDELVHMLTQLHSF.

An N-terminal signal peptide occupies residues 1-33 (MKQRRRRNGCSSSNTISLLLLFFLVFFSRTSTS). The Extracellular segment spans residues 34–62 (TSCRRRTVKHLSTTSTSSTPLESRITSKV). The chain crosses the membrane as a helical span at residues 63–83 (IVISIVSGILTGLVSALVLAF). At 84–401 (LVRSIVKFMK…VHMLTQLHSF (318 aa)) the chain is on the cytoplasmic side. A Protein kinase domain is found at 118-401 (SNGIQLLGSD…VHMLTQLHSF (284 aa)). ATP contacts are provided by residues 124-132 (LGSDLNGKY) and Lys146.

It belongs to the protein kinase superfamily. Ser/Thr protein kinase family. In terms of assembly, self-interacts. Parts of a tetrameric complex made of two CLV2/CRN heterodimers that can interact with CLV3 and CLE peptides. CLV2/CRN heterodimer interacts with CLV1 homodimers. Interacts with CLV1 and CLV2. CLV2/CRN heterodimer can interact with BAM3. In terms of tissue distribution, present in roots, stems, leaves, inflorescence, flowers and siliques. Mostly expressed in shoot tips and, to a lesser extent, in young organs and roots. Also expressed in the inner tissues of the proximal root meristem. Expressed in the vascular cylinder of root tips, mostly in phloem poles.

Its subcellular location is the cell membrane. The protein resides in the endoplasmic reticulum membrane. Involved in the perception of CLV3 and CLV3-like (CLE) peptides, that act as extracellular signals regulating meristem maintenance. Modulates root, shoot and flower apical meristem maintenance and floral organ development regulation, probably via CLAVATA (CLV)-like pathways involving at least CLV3 and CLE19. In complex with CLV2, perceives secreted CLV3-like effector proteins from plant-parasitic cyst nematodes as ligand mimics of the plant CLE signaling pathway. This recognition is required for proper feeding structure (syncytium) development and ultimately successful nematode infection. CLE14 perception by CLV2/CRN complex triggers root meristem differentiation. Required for the sensing of the root CLE peptides (e.g. CLE8, CLE9/CLE10, CLE11, CLE13, CLE14, CLE16, CLE17, CLE18, CLE20, CLE21, CLE25, CLE26, CLE40, CLE41/CLE44 and CLE45), which also involves CLV2 and leads to root growth regulation, mostly in the phloem and protophloem. Promotes the accumulation of BAM3, especially at later stages of protophloem development. This is Inactive leucine-rich repeat receptor-like protein kinase CORYNE from Arabidopsis thaliana (Mouse-ear cress).